Here is a 282-residue protein sequence, read N- to C-terminus: Bifunctional protein FolD (282 aa).

NADP(+) is bound by residues 165–167 and I231; that span reads GAS.

It belongs to the tetrahydrofolate dehydrogenase/cyclohydrolase family. Homodimer.

It catalyses the reaction (6R)-5,10-methylene-5,6,7,8-tetrahydrofolate + NADP(+) = (6R)-5,10-methenyltetrahydrofolate + NADPH. It carries out the reaction (6R)-5,10-methenyltetrahydrofolate + H2O = (6R)-10-formyltetrahydrofolate + H(+). It functions in the pathway one-carbon metabolism; tetrahydrofolate interconversion. Functionally, catalyzes the oxidation of 5,10-methylenetetrahydrofolate to 5,10-methenyltetrahydrofolate and then the hydrolysis of 5,10-methenyltetrahydrofolate to 10-formyltetrahydrofolate. In Francisella tularensis subsp. tularensis (strain FSC 198), this protein is Bifunctional protein FolD.